A 499-amino-acid polypeptide reads, in one-letter code: Glycerol kinase (499 aa).

Thr-12 lines the ADP pocket. ATP is bound by residues Thr-12, Thr-13, and Ser-14. Thr-12 contributes to the sn-glycerol 3-phosphate binding site. Arg-16 lines the ADP pocket. The sn-glycerol 3-phosphate site is built by Arg-82, Glu-83, Tyr-135, and Asp-245. Residues Arg-82, Glu-83, Tyr-135, Asp-245, and Gln-246 each coordinate glycerol. ADP contacts are provided by Thr-267 and Gly-310. Thr-267, Gly-310, Gln-314, and Gly-411 together coordinate ATP. ADP is bound by residues Gly-411 and Asn-415.

Belongs to the FGGY kinase family. Homotetramer and homodimer (in equilibrium).

It catalyses the reaction glycerol + ATP = sn-glycerol 3-phosphate + ADP + H(+). Its pathway is polyol metabolism; glycerol degradation via glycerol kinase pathway; sn-glycerol 3-phosphate from glycerol: step 1/1. With respect to regulation, activated by phosphorylation and inhibited by fructose 1,6-bisphosphate (FBP). Key enzyme in the regulation of glycerol uptake and metabolism. Catalyzes the phosphorylation of glycerol to yield sn-glycerol 3-phosphate. This Clostridium beijerinckii (strain ATCC 51743 / NCIMB 8052) (Clostridium acetobutylicum) protein is Glycerol kinase.